We begin with the raw amino-acid sequence, 653 residues long: Ran-binding protein 9 (653 aa).

A compositionally biased stretch (pro residues) spans 1 to 21 (MSGQPPPPPPQQQPPPPPPPA). Residues 1–62 (MSGQPPPPPP…SAAAPFPHGD (62 aa)) form a disordered region. Positions 22 to 57 (SAAAPATAPPGLAVGPGPAAGVPVPGLAAGSSAAAP) are enriched in low complexity. One can recognise a B30.2/SPRY domain in the interval 72–259 (LQRRLKRLYP…VDANFGQHPF (188 aa)). The LisH domain maps to 290-322 (WQTMIQKMVSSYLVHHGYCATAEAFARSTDQTV). The interval 326–332 (LASIKNR) is interaction with CALB1. Residues 328-385 (SIKNRQRIQKLVLAGRMGEAIETTQQLYPSLLERNPNLLFTLKVRQFIEMVNGTDSEV) form the CTLH domain. Position 330 is an N6-acetyllysine (Lys-330). Residues 386–422 (RCLGGRSPKSQDSYPVSPRPFSSPSMSPSHGMSIHSL) are disordered. The span at 398-421 (SYPVSPRPFSSPSMSPSHGMSIHS) shows a compositional bias: low complexity. A phosphoserine mark is found at Ser-402 and Ser-412. The tract at residues 539 to 653 (AAIERMIHFG…AFATVEDYLH (115 aa)) is interaction with FMR1.

It belongs to the RANBP9/10 family. Part of a complex consisting of RANBP9, MKLN1 and GID8. Identified in the CTLH complex that contains GID4, RANBP9 and/or RANBP10, MKLN1, MAEA, RMND5A (or alternatively its paralog RMND5B), GID8, ARMC8, WDR26 and YPEL5. Within this complex, MAEA, RMND5A (or alternatively its paralog RMND5B), GID8, WDR26, and RANBP9 and/or RANBP10 form the catalytic core, while GID4, MKLN1, ARMC8 and YPEL5 have ancillary roles. Interacts with GTP-bound Ran, AR, CDC2L1/p110C, CALB1, S100A7, USP11, SOS1 or SOS2, GID8, and FMR1. Interacts with the Dyrk kinases HIPK2, DYRK1A, and DYRK1B. Interacts with TP73 isoform Alpha but not with TP53. Interacts with the HGF receptor MET and the integrins ITGB1 and ITGB2, but not with ITGAL. Part of a complex consisting of RANBP9, RAN, DYRK1B and COPS5. Directly interacts with RANBP10. Interacts with YPEL5. Interacts with MKLN1. Interacts with DDX4. Interacts with NGFR. Interacts with Tex19.1 and, probably, Tex19.2. Phosphorylated in response to stress. Post-translationally, ubiquitinated. Polyubiquitination targets the protein for rapid degradation via the ubiquitin system. In terms of tissue distribution, ubiquitously expressed, with highest levels in maturating spermatocytes.

The protein resides in the cytoplasm. It localises to the cell membrane. Its subcellular location is the nucleus. Its function is as follows. May act as scaffolding protein, and as adapter protein to couple membrane receptors to intracellular signaling pathways. Acts as a mediator of cell spreading and actin cytoskeleton rearrangement. Core component of the CTLH E3 ubiquitin-protein ligase complex that selectively accepts ubiquitin from UBE2H and mediates ubiquitination and subsequent proteasomal degradation of the transcription factor HBP1. May be involved in signaling of ITGB2/LFA-1 and other integrins. Enhances HGF-MET signaling by recruiting Sos and activating the Ras pathway. Enhances dihydrotestosterone-induced transactivation activity of AR, as well as dexamethasone-induced transactivation activity of NR3C1, but not affect estrogen-induced transactivation. Stabilizes TP73 isoform Alpha, probably by inhibiting its ubiquitination, and increases its proapoptotic activity. Inhibits the kinase activity of DYRK1A and DYRK1B. Inhibits FMR1 binding to RNA. In Mus musculus (Mouse), this protein is Ran-binding protein 9.